The primary structure comprises 170 residues: Ribosomal RNA small subunit methyltransferase G (170 aa).

S-adenosyl-L-methionine contacts are provided by residues Gly70, Leu75, Ala120–Glu121, and Arg138.

Belongs to the methyltransferase superfamily. RNA methyltransferase RsmG family.

The protein resides in the cytoplasm. Its function is as follows. Specifically methylates the N7 position of guanine in position 518 of 16S rRNA. This Mycobacterium ulcerans (strain Agy99) protein is Ribosomal RNA small subunit methyltransferase G.